Here is a 473-residue protein sequence, read N- to C-terminus: 3-isopropylmalate dehydratase large subunit (473 aa).

[4Fe-4S] cluster-binding residues include Cys355, Cys415, and Cys418. The disordered stretch occupies residues 423 to 452; that stretch reads PDQLAPGERSASTSNRNFEGRQGKGGRTHL.

This sequence belongs to the aconitase/IPM isomerase family. LeuC type 1 subfamily. Heterodimer of LeuC and LeuD. [4Fe-4S] cluster is required as a cofactor.

The enzyme catalyses (2R,3S)-3-isopropylmalate = (2S)-2-isopropylmalate. The protein operates within amino-acid biosynthesis; L-leucine biosynthesis; L-leucine from 3-methyl-2-oxobutanoate: step 2/4. Its function is as follows. Catalyzes the isomerization between 2-isopropylmalate and 3-isopropylmalate, via the formation of 2-isopropylmaleate. The sequence is that of 3-isopropylmalate dehydratase large subunit from Corynebacterium jeikeium (strain K411).